Reading from the N-terminus, the 4249-residue chain is Fibrocystin-L (4249 aa).

The signal sequence occupies residues 1–20; the sequence is MGHLWLSGTWFLFGLLWCAA. The Extracellular portion of the chain corresponds to 21–4222; that stretch reads DSHKGSSETI…TPVQTLAVIT (4202 aa). IPT/TIG domains follow at residues 31–132, 146–255, 270–361, 1067–1153, 1155–1234, 1240–1323, 1329–1468, 1565–1648, 1658–1742, 1748–1827, 1830–1909, 1915–1996, 1998–2084, and 2090–2175; these read PKVT…GVAS, PTIR…KMTY, PEVV…ILEY, PLIL…HFIY, SQIS…SFSY, PVVT…KLNA, LEVI…SFSY, PSII…TLTK, PNID…SFSY, PYVT…NLTI, PAVA…SFTY, PFLK…AFEY, LSIQ…LFTY, and PLIT…DFLY. One can recognise a PA14 domain in the interval 337–492; the sequence is PGGRGLKVEV…NVFTEQQTGD (156 aa). O-linked (GalNAc...) threonine glycans are attached at residues threonine 1297 and threonine 1359. An O-linked (GalNAc...) threonine glycan is attached at threonine 1838. The G8 1 domain maps to 2183 to 2303; it reads SSWGGSPPPE…IPVVWTRLTH (121 aa). PbH1 repeat units follow at residues 2484 to 2506, 2507 to 2529, 2565 to 2587, 2664 to 2686, and 2732 to 2755; these read QFKSYVKGCAIHQSYNRAITIHN, THHLLVERNIIYDIKGGAFFIED, NPNNTIRHNAAAGGTHFGFWYRM, GGALQFHNFVMVNNNEAGIETKR, and SQGLTVSSVHFMNFDRHACVALGV. A G8 2 domain is found at 3035 to 3173; sequence SFWQSSPENN…HSVYKTKLLE (139 aa). PbH1 repeat units follow at residues 3292-3314, 3354-3376, 3415-3437, 3470-3492, and 3493-3514; these read KGNARISNVEFHHSGQEGYRDST, TDGVDIDDNIIYFTVGEGIRIWG, GTNTVLQNNVVAGFGRVGYRIDG, PGCSLIQGFTIWTCWDYGIYFQT, and TESVHIYNVTLVNNGMSIFSMV. A glycan (O-linked (GalNAc...) threonine) is linked at threonine 3735. The interval 4183–4208 is disordered; it reads LSAQSVPGGSGSSPGSGSSSSGHSKA. Over residues 4197-4208 the composition is skewed to low complexity; sequence GSGSSSSGHSKA. A helical membrane pass occupies residues 4223-4243; it reads ACLVGRLLLLEVFMAAVFILN. At 4244–4249 the chain is on the cytoplasmic side; the sequence is TTVGIN.

In terms of tissue distribution, expressed in neurons in the hippocampus and the cerebral cortex (at protein level). Transiently expressed at high levels in inner ear hair cells, predominantly in outer hair cells, during early postnatal development (at protein level).

Its subcellular location is the membrane. The protein resides in the cell projection. It is found in the stereocilium membrane. Its function is as follows. Component of hair-cell stereocilia coat. Required for normal hearing. This is Fibrocystin-L (Pkhd1l1) from Mus musculus (Mouse).